Consider the following 120-residue polypeptide: Superoxide dismutase [Cu-Zn] (120 aa).

Positions 11, 13, and 28 each coordinate Cu cation. The disordered stretch occupies residues 16–52 (GDTTNGCMSTGPHFNPTGKEHGAPQDENRHAGDLGNI). C22 and C112 are disulfide-bonded. Zn(2+) contacts are provided by H28, H36, H45, and D48. Basic and acidic residues predominate over residues 33–47 (GKEHGAPQDENRHAG). H85 serves as a coordination point for Cu cation.

This sequence belongs to the Cu-Zn superoxide dismutase family. In terms of assembly, homodimer. It depends on Cu cation as a cofactor. Zn(2+) is required as a cofactor.

It is found in the cytoplasm. The enzyme catalyses 2 superoxide + 2 H(+) = H2O2 + O2. Destroys radicals which are normally produced within the cells and which are toxic to biological systems. The chain is Superoxide dismutase [Cu-Zn] (sodC) from Aspergillus japonicus.